The primary structure comprises 305 residues: Carbonic anhydrase 4 (305 aa).

The signal sequence occupies residues 1–17 (MQLLLALLALAYVAPST). An Alpha-carbonic anhydrase domain is found at 20-278 (SGWCYEIQTK…LGKRQVFKSH (259 aa)). Disulfide bonds link Cys23–Cys35 and Cys45–Cys222. His87 serves as the catalytic Proton donor/acceptor. Zn(2+) contacts are provided by His114 and His116. N-linked (GlcNAc...) asparagine glycosylation occurs at Asn123. A Zn(2+)-binding site is contributed by His139. An N-linked (GlcNAc...) asparagine glycan is attached at Asn214. 218-219 (TT) lines the substrate pocket. Ser277 is lipidated: GPI-anchor amidated serine. The propeptide at 278–305 (HAPGQLLSLPLPTLLVPTLTCLVANFLQ) is removed in mature form.

This sequence belongs to the alpha-carbonic anhydrase family. Interacts with SLC4A4. Requires Zn(2+) as cofactor.

The protein localises to the cell membrane. The catalysed reaction is hydrogencarbonate + H(+) = CO2 + H2O. With respect to regulation, inhibited by acetazolamide. Catalyzes the reversible hydration of carbon dioxide into bicarbonate and protons and thus is essential to maintaining intracellular and extracellular pH. May stimulate the sodium/bicarbonate transporter activity of SLC4A4 that acts in pH homeostasis. It is essential for acid overload removal from the retina and retina epithelium, and acid release in the choriocapillaris in the choroid. This Mus musculus (Mouse) protein is Carbonic anhydrase 4 (Ca4).